The chain runs to 191 residues: UPF0312 protein Shewmr7_1249 (191 aa).

The N-terminal stretch at 1-22 (MKKQLLAALIGGFLLAPMAASA) is a signal peptide.

Belongs to the UPF0312 family. Type 1 subfamily.

Its subcellular location is the periplasm. This is UPF0312 protein Shewmr7_1249 from Shewanella sp. (strain MR-7).